Reading from the N-terminus, the 552-residue chain is Cytochrome P450 monooxyhenase eriI (552 aa).

A helical membrane pass occupies residues phenylalanine 9 to valine 26. 2 N-linked (GlcNAc...) asparagine glycosylation sites follow: asparagine 50 and asparagine 447. Position 495 (cysteine 495) interacts with heme.

It belongs to the cytochrome P450 family. It depends on heme as a cofactor.

It is found in the membrane. It carries out the reaction (-)-cyatha-3,12-diene + reduced [NADPH--hemoprotein reductase] + O2 = erinacol + oxidized [NADPH--hemoprotein reductase] + H2O + H(+). It participates in secondary metabolite biosynthesis. Functionally, cytochrome P450 monooxygenase; part of the gene cluster that mediates the biosynthesis of erinacines, cyathane-xylosides that show unique biological activities, including leishmanicidal activity, stimulating activity for nerve growth-factor synthesis, and agonistic activity toward the kappa opioid receptor. Within the pathway, eriI hydroxylates cyatha-3,12-diene at C-14 of the seven-membered ring to yield erinacol. The first step of the erinacines biosynthesis pathway is catalyzed by the geranylgeranyl diphosphate (GGPP) synthase eriE via conversion of farnesyl pyrophosphate and isopentyl pyrophosphate into geranylgeranyl pyrophosphate (GGPP). GGPP is then substrate of the diterpene cyclase eriG for the production of cyatha-3,12-diene. The cytochrome P450 monooxygenase eriI then hydroxylates cyatha-3,12-diene at C-14 of the seven-membered ring to produce erinacol, which is further hydroxylated at C-15 by the cytochrome P450 monooxygenase eriC to yield cyathadiol. The cytochrome P450 monooxygenase eriA then catalyzes C-11 hydroxylation in the presence of the short chain dehydrogenase/reductase (SDR) eriH, which leads to the production of cyathatriol. The acetyltransferase eriL converts cyathatriol into 11-O-acetyl-cyathatriol. The SDR eriH catalyzes further oxidation of 11-O-acetyl-cyathatriol into 1-O-acetylcyathin A3. Finally, the glycosyl transferase eriJ tranfers xylose from UDP-xylose onto C-14 of 11-O-acetyl-cyathatriol to form eracine Q. EriJ is also able to convert 11-O-acetyl-cyathatriol to eracine Q2 by using UDP-D-glucose as cosubstrate, but at a lower rate. In terms of biological role, cytochrome P450 monooxygenase; part of the gene cluster that mediates the biosynthesis of erinacines, cyathane-xylosides that show unique biological activities, including leishmanicidal activity, stimulating activity for nerve growth-factor synthesis, and agonistic activity toward the kappa opioid receptor. The geranylgeranyl diphosphate (GGPP) synthase eriE catalyzes the first step in erinacines biosynthesis via conversion of farnesyl pyrophosphate and isopentyl pyrophosphate into geranylgeranyl pyrophosphate (GGPP). GGPP is then substrate of the diterpene cyclase eriG for the production of cyatha-3,12-diene. EriG is unable to use geranyl diphosphate (GPP) or farnesyl diphosphate (FPP) as substrates. The cytochrome P450 monooxygenase eriI then hydroxylates cyatha-3,12-diene at C-14 of the seven-membered ring to produce erinacol, which is further hydroxylated at C-15 by the cytochrome P450 monooxygenase eriC to yield cyathadiol. The cytochrome P450 monooxygenase eriA then catalyzes C-11 hydroxylation in the presence of the short chain dehydrogenase/reductase (SDR) eriH, which leads to the production of cyathatriol. The acetyltransferase eriL converts cyathatriol into 11-O-acetyl-cyathatriol. The SDR eriH catalyzes further oxidation of 11-O-acetyl-cyathatriol into 1-O-acetylcyathin A3. Finally, the glycosyl transferase eriJ tranfers xylose from UDP-xylose onto C-14 of 11-O-acetyl-cyathatriol to form eracine Q. EriJ is also able to convert 11-O-acetyl-cyathatriol to eracine Q2 by using UDP-D-glucose as cosubstrate, but at a lower rate. In the absence of eriL and eriJ, the SDR eriH is able to convert cyathatriol to cyathin A3; this is likely a switching mechanism in the biosynthesis of cyathins (C-14 ketogroup)and erinacines (C-14 glycosylated group). The roles of the SDR eriB, the polyprenyl transferase eriF and the dehydrogenase eriK have still to be identified. The polypeptide is Cytochrome P450 monooxyhenase eriI (Hericium erinaceus (Lion's mane mushroom)).